We begin with the raw amino-acid sequence, 367 residues long: MAIQKRVLVAMSGGVDSSVTAALLQQQGYDIVGVTMQIWDPEVTVVGDDYVGCCSLTAVDDARRVANVLGIPYYVLNFRELFTEKVIQYFVDEYFQGRTPNPCIACNRFIKFEALLQRARQMGFDYIATGHYARLGYSEEFQRYTVKKALDDKKDQSYVLYGFTQDQIAHTLMPLADYTKDQVRGIAKEMGLPTYSKPESQEICFVHDNNYRNFLDERSQGGIKPGPFKDLAGNVLGEHKGIPFYTIGQRRGLGLATGERTYVIDIDPDNNVVTVGSEEAIWGTELIASENNFILFENLTGPQELEAQVRYNSKPSPAIIEPYGEGLVKVTFKYPQRAITPGQAVVYYQGDYLVGGGTIEKTIKQKN.

ATP is bound by residues 10–17 (AMSGGVDS) and Met-36. The active-site Nucleophile is the Cys-106. Cys-106 and Cys-204 are oxidised to a cystine. Gly-130 serves as a coordination point for ATP. Residues 154–156 (KDQ) form an interaction with tRNA region. Cys-204 (cysteine persulfide intermediate) is an active-site residue. The interaction with tRNA stretch occupies residues 310–311 (RY).

This sequence belongs to the MnmA/TRMU family.

The protein resides in the cytoplasm. It catalyses the reaction S-sulfanyl-L-cysteinyl-[protein] + uridine(34) in tRNA + AH2 + ATP = 2-thiouridine(34) in tRNA + L-cysteinyl-[protein] + A + AMP + diphosphate + H(+). Functionally, catalyzes the 2-thiolation of uridine at the wobble position (U34) of tRNA, leading to the formation of s(2)U34. The polypeptide is tRNA-specific 2-thiouridylase MnmA (Desulforamulus reducens (strain ATCC BAA-1160 / DSM 100696 / MI-1) (Desulfotomaculum reducens)).